Here is a 154-residue protein sequence, read N- to C-terminus: ATP synthase subunit b (154 aa).

The chain crosses the membrane as a helical span at residues 5–27; sequence LLGQAIAFTLFVWFCMKYVWPPI.

It belongs to the ATPase B chain family. As to quaternary structure, F-type ATPases have 2 components, F(1) - the catalytic core - and F(0) - the membrane proton channel. F(1) has five subunits: alpha(3), beta(3), gamma(1), delta(1), epsilon(1). F(0) has three main subunits: a(1), b(2) and c(10-14). The alpha and beta chains form an alternating ring which encloses part of the gamma chain. F(1) is attached to F(0) by a central stalk formed by the gamma and epsilon chains, while a peripheral stalk is formed by the delta and b chains.

It is found in the cell inner membrane. F(1)F(0) ATP synthase produces ATP from ADP in the presence of a proton or sodium gradient. F-type ATPases consist of two structural domains, F(1) containing the extramembraneous catalytic core and F(0) containing the membrane proton channel, linked together by a central stalk and a peripheral stalk. During catalysis, ATP synthesis in the catalytic domain of F(1) is coupled via a rotary mechanism of the central stalk subunits to proton translocation. In terms of biological role, component of the F(0) channel, it forms part of the peripheral stalk, linking F(1) to F(0). This chain is ATP synthase subunit b, found in Aliivibrio fischeri (strain ATCC 700601 / ES114) (Vibrio fischeri).